The following is a 622-amino-acid chain: WD repeat-containing protein 70 (622 aa).

The span at arginine 36–leucine 55 shows a compositional bias: basic and acidic residues. The tract at residues arginine 36–serine 141 is disordered. A compositionally biased stretch (low complexity) spans serine 67–glutamate 84. Residues serine 120–aspartate 132 are compositionally biased toward acidic residues. WD repeat units follow at residues histidine 148–glutamine 187, cysteine 195–lysine 236, glycine 249–glycine 289, glycine 298–phenylalanine 337, threonine 344–asparagine 383, glycine 387–glutamate 434, and valine 437–alanine 476. A compositionally biased stretch (basic and acidic residues) spans arginine 508 to glutamate 533. 2 disordered regions span residues arginine 508–glycine 549 and alanine 602–isoleucine 622. Gly residues predominate over residues proline 539–glycine 549. Residues valine 604–glutamate 614 show a composition bias toward acidic residues.

It belongs to the WD repeat GAD-1 family.

In Xenopus laevis (African clawed frog), this protein is WD repeat-containing protein 70 (wdr70).